The following is a 293-amino-acid chain: Peptidoglycan deacetylase (293 aa).

Zn(2+)-binding residues include Asp-14, His-86, and His-90. Residues 29-276 (PDDISRGLFA…INKHEGVRWV (248 aa)) enclose the NodB homology domain.

This sequence belongs to the polysaccharide deacetylase family. Homotetramer.

It carries out the reaction Deacetylation of xylans and xylo-oligosaccharides.. In terms of biological role, catalyzes the N-deacetylation of peptidoglycan (PG), an important mechanism that appears to confer lysozyme resistance and to mitigate host immune detection; this likely contributes to pathogen persistence in the host. The exact nature of the residue in PG that is deacetylated has not been determined. Is also able to catalyze the deacetylation of acetylated xylan, and, to a lesser extent, that of chitin and chitosan. Therefore, this enzyme might play a role during infection, considering that xylan-containing carbohydrate structures are among those commonly consumed by humans. In Helicobacter pylori (strain ATCC 700392 / 26695) (Campylobacter pylori), this protein is Peptidoglycan deacetylase (pgdA).